The following is a 213-amino-acid chain: Urease accessory protein UreG (213 aa).

10 to 17 (GPVGSGKT) provides a ligand contact to GTP.

This sequence belongs to the SIMIBI class G3E GTPase family. UreG subfamily. Homodimer. UreD, UreF and UreG form a complex that acts as a GTP-hydrolysis-dependent molecular chaperone, activating the urease apoprotein by helping to assemble the nickel containing metallocenter of UreC. The UreE protein probably delivers the nickel.

It localises to the cytoplasm. In terms of biological role, facilitates the functional incorporation of the urease nickel metallocenter. This process requires GTP hydrolysis, probably effectuated by UreG. The sequence is that of Urease accessory protein UreG from Deinococcus radiodurans (strain ATCC 13939 / DSM 20539 / JCM 16871 / CCUG 27074 / LMG 4051 / NBRC 15346 / NCIMB 9279 / VKM B-1422 / R1).